We begin with the raw amino-acid sequence, 692 residues long: Elongation factor G (692 aa).

Positions Glu-8–Thr-282 constitute a tr-type G domain. Residues Ala-17–Thr-24, Asp-81–His-85, and Asn-135–Asp-138 contribute to the GTP site.

The protein belongs to the TRAFAC class translation factor GTPase superfamily. Classic translation factor GTPase family. EF-G/EF-2 subfamily.

Its subcellular location is the cytoplasm. In terms of biological role, catalyzes the GTP-dependent ribosomal translocation step during translation elongation. During this step, the ribosome changes from the pre-translocational (PRE) to the post-translocational (POST) state as the newly formed A-site-bound peptidyl-tRNA and P-site-bound deacylated tRNA move to the P and E sites, respectively. Catalyzes the coordinated movement of the two tRNA molecules, the mRNA and conformational changes in the ribosome. This Bacillus velezensis (strain DSM 23117 / BGSC 10A6 / LMG 26770 / FZB42) (Bacillus amyloliquefaciens subsp. plantarum) protein is Elongation factor G.